We begin with the raw amino-acid sequence, 378 residues long: Poly(3-hydroxyalkanoate) polymerase subunit PhaC (378 aa).

The 273-residue stretch at 84-356 (PVLIVYALVN…QSFPVGHIGM (273 aa)) folds into the AB hydrolase-1 domain.

The protein belongs to the PHA/PHB synthase family. Type III PhaC subfamily. In terms of assembly, forms a heterodimer with PhaE, which may multimerize in the presence of 3-hydroxybutyryl-CoA. Both subunits are required for PHB synthesis in E.coli and in PHA-negative A.eutrophus.

It is found in the cytoplasm. It catalyses the reaction (3R)-3-hydroxybutanoyl-CoA + [(3R)-hydroxybutanoate](n) = [(3R)-hydroxybutanoate](n+1) + CoA. It participates in biopolymer metabolism; poly-(R)-3-hydroxybutanoate biosynthesis. Functionally, when expressed in E.coli with Synechocystis PhaE and C.necator PhaA and PhaB, confers the ability to synthesize up to 13% (w/w) poly(3-hydroxybutyrate) (PHB) depending on the carbon source; all 4 genes are necessary for PHB production. Cell-free in vitro coexpression with PhaE gives a heterodimer able to polymerize 3-hydroxybutyrate-CoA. The chain is Poly(3-hydroxyalkanoate) polymerase subunit PhaC from Synechocystis sp. (strain ATCC 27184 / PCC 6803 / Kazusa).